We begin with the raw amino-acid sequence, 448 residues long: MATAVETLDKLERRITITVPVAEVQTEVEKRLKVRARTVKAPGFRAGKVPMKMVAQQYGYQIENEVLNDKVGQAFGEATSENKLRVAGYPKIEAKNDDVAEGTLAFNATFEIYPEIKVGDLASAEVEKTIVEVSDAEIDKTIDILRKQRVHYHVKGEQSAHGDGGSDLTAKNSDRVTIDFVGTINGVEFQGGKAEGYAFVLGEGRMLAEFEAGTIGLKVGESKTFPLSFPADYHGADVAGKTAEFTITLKQIEWAHMPEVDAEFAKSLGIEDGDLEKMRADVKQNLEREVSNRVKARTKDSVMDALIKISEFDVPKVLIDQETQRLMESTRQDMAQRGMKVSDLPFPPELFTEQAERRVRLGLILAEVVKANELQAKPEQVKAQVEEFAQSYEDPTQVLKYYFSDRSRLAEVEALVLEENVVNYVLGKAKVADKSVAFDELMGNNAQG.

Residues 173–258 (SDRVTIDFVG…LKQIEWAHMP (86 aa)) form the PPIase FKBP-type domain.

It belongs to the FKBP-type PPIase family. Tig subfamily.

The protein resides in the cytoplasm. It carries out the reaction [protein]-peptidylproline (omega=180) = [protein]-peptidylproline (omega=0). Involved in protein export. Acts as a chaperone by maintaining the newly synthesized protein in an open conformation. Functions as a peptidyl-prolyl cis-trans isomerase. This chain is Trigger factor, found in Herminiimonas arsenicoxydans.